The sequence spans 250 residues: GTP cyclohydrolase 1 type 2 homolog (250 aa).

5 residues coordinate a divalent metal cation: H63, H64, D100, H218, and E222.

It belongs to the GTP cyclohydrolase I type 2/NIF3 family. As to quaternary structure, homohexamer.

In Pyrococcus abyssi (strain GE5 / Orsay), this protein is GTP cyclohydrolase 1 type 2 homolog.